The primary structure comprises 440 residues: Ribosomal protein uS12 methylthiotransferase RimO (440 aa).

Residues 8-118 enclose the MTTase N-terminal domain; that stretch reads PTVGFVSLGC…VMGIVHTHLP (111 aa). Positions 17, 53, 82, 149, 153, and 156 each coordinate [4Fe-4S] cluster. The Radical SAM core domain occupies 135-372; that stretch reads LTPDHFAYLK…MQVQEDISAD (238 aa). Residues 375–440 enclose the TRAM domain; the sequence is AAKIDTVIQV…DHHDLYAQVV (66 aa).

The protein belongs to the methylthiotransferase family. RimO subfamily. It depends on [4Fe-4S] cluster as a cofactor.

It is found in the cytoplasm. It catalyses the reaction L-aspartate(89)-[ribosomal protein uS12]-hydrogen + (sulfur carrier)-SH + AH2 + 2 S-adenosyl-L-methionine = 3-methylsulfanyl-L-aspartate(89)-[ribosomal protein uS12]-hydrogen + (sulfur carrier)-H + 5'-deoxyadenosine + L-methionine + A + S-adenosyl-L-homocysteine + 2 H(+). Its function is as follows. Catalyzes the methylthiolation of an aspartic acid residue of ribosomal protein uS12. In Dechloromonas aromatica (strain RCB), this protein is Ribosomal protein uS12 methylthiotransferase RimO.